Here is a 239-residue protein sequence, read N- to C-terminus: Octanoyl-[acyl-carrier-protein]:protein N-octanoyltransferase LIPT2, mitochondrial (239 aa).

A mitochondrion-targeting transit peptide spans 1 to 18 (MSVPVLRVRRLGLVGYAE). Residues 37-217 (GSPGGALLLC…AFEEEFQCQL (181 aa)) enclose the BPL/LPL catalytic domain. Substrate-binding positions include 81–88 (RGGLITFH), 147–149 (AIG), and 160–162 (GLA). The Acyl-thioester intermediate role is filled by Cys-178. Residues 220–239 (EQNPEQNPVQNRPDRDAGPL) are disordered.

It belongs to the LipB family.

It is found in the mitochondrion. The enzyme catalyses octanoyl-[ACP] + L-lysyl-[protein] = N(6)-octanoyl-L-lysyl-[protein] + holo-[ACP] + H(+). Its pathway is protein modification; protein lipoylation via endogenous pathway; protein N(6)-(lipoyl)lysine from octanoyl-[acyl-carrier-protein]: step 1/2. Catalyzes the transfer of endogenously produced octanoic acid from octanoyl-acyl-carrier-protein (octanoyl-ACP) onto the lipoyl domains of lipoate-dependent enzymes such as the protein H of the glycine cleavage system (GCSH). Lipoyl-ACP can also act as a substrate although octanoyl-ACP is likely to be the physiological substrate. This is Octanoyl-[acyl-carrier-protein]:protein N-octanoyltransferase LIPT2, mitochondrial (lipt2) from Xenopus tropicalis (Western clawed frog).